The sequence spans 130 residues: Putative pre-16S rRNA nuclease (130 aa).

It belongs to the YqgF nuclease family.

The protein localises to the cytoplasm. Functionally, could be a nuclease involved in processing of the 5'-end of pre-16S rRNA. The protein is Putative pre-16S rRNA nuclease of Buchnera aphidicola subsp. Cinara cedri (strain Cc).